The primary structure comprises 207 residues: Outer-membrane lipoprotein LolB (207 aa).

The first 21 residues, 1-21 (MPLPDFRLIRLLPLASLVLTA), serve as a signal peptide directing secretion. Cysteine 22 carries N-palmitoyl cysteine lipidation. Residue cysteine 22 is the site of S-diacylglycerol cysteine attachment.

The protein belongs to the LolB family. In terms of assembly, monomer.

The protein resides in the cell outer membrane. Its function is as follows. Plays a critical role in the incorporation of lipoproteins in the outer membrane after they are released by the LolA protein. This chain is Outer-membrane lipoprotein LolB, found in Escherichia fergusonii (strain ATCC 35469 / DSM 13698 / CCUG 18766 / IAM 14443 / JCM 21226 / LMG 7866 / NBRC 102419 / NCTC 12128 / CDC 0568-73).